The sequence spans 147 residues: MGIITLSGNVLHLLKAYPKKGLEEVSQPEPNTANDSSTEYKGKSKDDFQMVEKSNTDERYNFTRTKKWFLLMTSEYYKLMENRLLMFCIIACSFICAIQFLFFIIYWTNIVPRKTQRAITNLNYDYLTAHLKEQCVPYAKILDQCIL.

The tract at residues 23-48 is disordered; that stretch reads EEVSQPEPNTANDSSTEYKGKSKDDF. The span at 28-37 shows a compositional bias: polar residues; that stretch reads PEPNTANDSS. The segment covering 38–48 has biased composition (basic and acidic residues); it reads TEYKGKSKDDF. Residues 85–105 traverse the membrane as a helical segment; sequence LMFCIIACSFICAIQFLFFII.

It localises to the membrane. This is an uncharacterized protein from Saccharomyces cerevisiae (strain ATCC 204508 / S288c) (Baker's yeast).